The primary structure comprises 482 residues: tRNA sulfurtransferase (482 aa).

Positions 61–165 (DVTLAVLTQT…NDKLNLIIAR (105 aa)) constitute a THUMP domain. ATP contacts are provided by residues 183-184 (LI), Lys265, Gly287, and Gln296. A disulfide bridge connects residues Cys344 and Cys456. The 79-residue stretch at 404-482 (LGSDVVVLDI…GYKNVKVYRP (79 aa)) folds into the Rhodanese domain. Residue Cys456 is the Cysteine persulfide intermediate of the active site.

It belongs to the ThiI family.

Its subcellular location is the cytoplasm. It carries out the reaction [ThiI sulfur-carrier protein]-S-sulfanyl-L-cysteine + a uridine in tRNA + 2 reduced [2Fe-2S]-[ferredoxin] + ATP + H(+) = [ThiI sulfur-carrier protein]-L-cysteine + a 4-thiouridine in tRNA + 2 oxidized [2Fe-2S]-[ferredoxin] + AMP + diphosphate. The enzyme catalyses [ThiS sulfur-carrier protein]-C-terminal Gly-Gly-AMP + S-sulfanyl-L-cysteinyl-[cysteine desulfurase] + AH2 = [ThiS sulfur-carrier protein]-C-terminal-Gly-aminoethanethioate + L-cysteinyl-[cysteine desulfurase] + A + AMP + 2 H(+). It participates in cofactor biosynthesis; thiamine diphosphate biosynthesis. Functionally, catalyzes the ATP-dependent transfer of a sulfur to tRNA to produce 4-thiouridine in position 8 of tRNAs, which functions as a near-UV photosensor. Also catalyzes the transfer of sulfur to the sulfur carrier protein ThiS, forming ThiS-thiocarboxylate. This is a step in the synthesis of thiazole, in the thiamine biosynthesis pathway. The sulfur is donated as persulfide by IscS. The sequence is that of tRNA sulfurtransferase from Aliivibrio fischeri (strain ATCC 700601 / ES114) (Vibrio fischeri).